Reading from the N-terminus, the 461-residue chain is Fumarate hydratase class II (461 aa).

Residues 97-99, 127-130, 137-139, and Thr-185 contribute to the substrate site; these read SGT, HPND, and SSN. The active-site Proton donor/acceptor is His-186. Ser-316 is a catalytic residue. Substrate contacts are provided by residues Ser-317 and 322–324; that span reads KVN.

It belongs to the class-II fumarase/aspartase family. Fumarase subfamily. As to quaternary structure, homotetramer.

Its subcellular location is the cytoplasm. The enzyme catalyses (S)-malate = fumarate + H2O. Its pathway is carbohydrate metabolism; tricarboxylic acid cycle; (S)-malate from fumarate: step 1/1. Involved in the TCA cycle. Catalyzes the stereospecific interconversion of fumarate to L-malate. This is Fumarate hydratase class II from Staphylococcus aureus (strain Mu50 / ATCC 700699).